An 872-amino-acid chain; its full sequence is F-box protein pof6 (872 aa).

The region spanning 30–75 (FGCLTINIYLKIFTLISTPDLCNCRLVCRKFQQLCDYNSIYVKKLL) is the F-box domain. The disordered stretch occupies residues 101–122 (MSSNTSKGFHLQSSDKKYADSD). The span at 113 to 122 (SSDKKYADSD) shows a compositional bias: basic and acidic residues.

Interacts with skp1. Forms a complex with pof6 and skp1.

It localises to the cytoplasm. The protein resides in the nucleus. Functionally, together with skp1, essential for septum processing and cell separation. The chain is F-box protein pof6 (pof6) from Schizosaccharomyces pombe (strain 972 / ATCC 24843) (Fission yeast).